The chain runs to 113 residues: Protein USP2 (113 aa).

An N-terminal signal peptide occupies residues 1–18; it reads MKITMFFAALSAASGVFA. Tandem repeats lie at residues 32–37, 40–45, 46–49, 50–53, 59–65, and 69–75. The 2 X 6 AA repeats stretch occupies residues 32–45; that stretch reads IGAGVGIGIGAGVG. Residues 46–53 form a 2 X 4 AA approximate tandem repeats region; sequence SYGYPYGA. The interval 59–75 is 2 X 7 AA approximate repeats; the sequence is LQLLPLRWLPLRRLPLR.

Its subcellular location is the secreted. This Puccinia graminis (Black stem rust fungus) protein is Protein USP2 (USP2).